The sequence spans 116 residues: Transcription initiation factor IIA subunit 2 (116 aa).

This sequence belongs to the TFIIA subunit 2 family. In terms of assembly, TFIIA is a heterodimer composed of the large TOA1 and the small TOA2 subunits.

The protein resides in the nucleus. TFIIA is a component of the transcription machinery of RNA polymerase II and plays an important role in transcriptional activation. TFIIA in a complex with tbp mediates transcriptional activity. This chain is Transcription initiation factor IIA subunit 2 (TOA2), found in Pyricularia oryzae (strain 70-15 / ATCC MYA-4617 / FGSC 8958) (Rice blast fungus).